The following is a 239-amino-acid chain: Uridylate kinase (239 aa).

Position 10–13 (10–13) interacts with ATP; it reads KLSG. The involved in allosteric activation by GTP stretch occupies residues 18-23; sequence GEQGYG. Glycine 52 contributes to the UMP binding site. ATP-binding residues include glycine 53 and arginine 57. UMP is bound by residues aspartate 72 and 133 to 140; that span reads TGNPYFST. ATP-binding residues include asparagine 161, tyrosine 167, and glutamate 170.

The protein belongs to the UMP kinase family. Homohexamer.

The protein resides in the cytoplasm. The enzyme catalyses UMP + ATP = UDP + ADP. It functions in the pathway pyrimidine metabolism; CTP biosynthesis via de novo pathway; UDP from UMP (UMPK route): step 1/1. Allosterically activated by GTP. Inhibited by UTP. Functionally, catalyzes the reversible phosphorylation of UMP to UDP. The protein is Uridylate kinase of Halalkalibacterium halodurans (strain ATCC BAA-125 / DSM 18197 / FERM 7344 / JCM 9153 / C-125) (Bacillus halodurans).